Here is a 284-residue protein sequence, read N- to C-terminus: NAD kinase (284 aa).

The Proton acceptor role is filled by Asp67. NAD(+) is bound by residues 67-68, 141-142, Arg152, Lys169, Asp171, 182-187, and Gln241; these read DG, ND, and TGYSLS.

Belongs to the NAD kinase family. A divalent metal cation is required as a cofactor.

Its subcellular location is the cytoplasm. It carries out the reaction NAD(+) + ATP = ADP + NADP(+) + H(+). Functionally, involved in the regulation of the intracellular balance of NAD and NADP, and is a key enzyme in the biosynthesis of NADP. Catalyzes specifically the phosphorylation on 2'-hydroxyl of the adenosine moiety of NAD to yield NADP. This Geobacter sulfurreducens (strain ATCC 51573 / DSM 12127 / PCA) protein is NAD kinase.